Here is an 86-residue protein sequence, read N- to C-terminus: MAHKKGVGSSKNGRESESKRLGVKIFGGQAAIAGNIIVRQRGTAHRPGDNVYAGKDHTLHARVDGLVKFTKKKDDKSYVSIEPFEA.

The protein belongs to the bacterial ribosomal protein bL27 family.

This Christiangramia forsetii (strain DSM 17595 / CGMCC 1.15422 / KT0803) (Gramella forsetii) protein is Large ribosomal subunit protein bL27.